We begin with the raw amino-acid sequence, 392 residues long: MPNFKSKKIKEINLPYSKDDVEFLWLAKNDNVSLIYTKVQEESFFLQIKKAQNGFVIKGDKHTKPSKIGYLQKALKIFKEGFCEDIINEAFGLKNNALIEKTPFIVDNFDELLSRLQGKIYIEIGFGSGRHLLYQAKENPNVLILGVEIYNPALTQVAKLAKAQNVNNILLIQSDARLLLSVLKSKSVEKIFLHFPVPWDKKPHRRVIGKDFCKECARVLVQNGRFELRTDSFEYFNFTLEQFLTFPAPKFSLRKNENLEISSKYEDRWKKQEKNIYDLWVWNFNQECKNYELNEFNLSSVEFSKEDLKKIEQNFKNITIKKDDFFLHFESIYKQDENLLLKVAFGAFNKPEHCYLHLDKTIDFAFKEPFKIQENIKAINELKEILKVQFKI.

3 residues coordinate S-adenosyl-L-methionine: Glu123, Glu148, and Asp175. Residues Lys201 and Asp231 each contribute to the substrate site.

It belongs to the class I-like SAM-binding methyltransferase superfamily. TrmB family.

It catalyses the reaction guanosine(46) in tRNA + S-adenosyl-L-methionine = N(7)-methylguanosine(46) in tRNA + S-adenosyl-L-homocysteine. It functions in the pathway tRNA modification; N(7)-methylguanine-tRNA biosynthesis. Functionally, catalyzes the formation of N(7)-methylguanine at position 46 (m7G46) in tRNA. This is tRNA (guanine-N(7)-)-methyltransferase from Campylobacter jejuni subsp. jejuni serotype O:2 (strain ATCC 700819 / NCTC 11168).